The sequence spans 164 residues: UBA-like domain-containing protein 2 (164 aa).

The residue at position 2 (S2) is an N-acetylserine. The segment at 144–164 (PPGASQGGAPQKAMAAMDGQR) is disordered.

It belongs to the UBALD family.

This is UBA-like domain-containing protein 2 (Ubald2) from Mus musculus (Mouse).